We begin with the raw amino-acid sequence, 393 residues long: Riboflavin biosynthesis protein RibBA (393 aa).

The DHBP synthase stretch occupies residues 1–200 (MQFDTIELAI…IKSLVAFRKA (200 aa)). Residues 27-28 (RE), D32, 139-143 (RNGHT), and E163 each bind D-ribulose 5-phosphate. Residue E28 participates in Mg(2+) binding. Mg(2+) is bound at residue H142. The interval 201 to 393 (VELNVNLKAK…TKKNKMGHLI (193 aa)) is GTP cyclohydrolase II. 249–253 (RMHSA) contributes to the GTP binding site. The Zn(2+) site is built by C254, C265, and C267. GTP is bound by residues Q270, 291-293 (EGR), and T313. D325 (proton acceptor; for GTP cyclohydrolase activity) is an active-site residue. R327 serves as the catalytic Nucleophile; for GTP cyclohydrolase activity. 2 residues coordinate GTP: S348 and K353.

It in the N-terminal section; belongs to the DHBP synthase family. This sequence in the C-terminal section; belongs to the GTP cyclohydrolase II family. It depends on Mg(2+) as a cofactor. Requires Mn(2+) as cofactor. Zn(2+) serves as cofactor.

It carries out the reaction D-ribulose 5-phosphate = (2S)-2-hydroxy-3-oxobutyl phosphate + formate + H(+). The catalysed reaction is GTP + 4 H2O = 2,5-diamino-6-hydroxy-4-(5-phosphoribosylamino)-pyrimidine + formate + 2 phosphate + 3 H(+). Its pathway is cofactor biosynthesis; riboflavin biosynthesis; 2-hydroxy-3-oxobutyl phosphate from D-ribulose 5-phosphate: step 1/1. It participates in cofactor biosynthesis; riboflavin biosynthesis; 5-amino-6-(D-ribitylamino)uracil from GTP: step 1/4. In terms of biological role, catalyzes the conversion of D-ribulose 5-phosphate to formate and 3,4-dihydroxy-2-butanone 4-phosphate. Its function is as follows. Catalyzes the conversion of GTP to 2,5-diamino-6-ribosylamino-4(3H)-pyrimidinone 5'-phosphate (DARP), formate and pyrophosphate. The protein is Riboflavin biosynthesis protein RibBA of Staphylococcus epidermidis (strain ATCC 35984 / DSM 28319 / BCRC 17069 / CCUG 31568 / BM 3577 / RP62A).